The primary structure comprises 362 residues: UDP-N-acetylglucosamine--N-acetylmuramyl-(pentapeptide) pyrophosphoryl-undecaprenol N-acetylglucosamine transferase (362 aa).

UDP-N-acetyl-alpha-D-glucosamine contacts are provided by residues 15 to 17 (TGG), Asn-127, Arg-165, Ser-191, Ile-247, 266 to 271 (ALTVSE), and Gln-292.

It belongs to the glycosyltransferase 28 family. MurG subfamily.

The protein resides in the cell inner membrane. The enzyme catalyses di-trans,octa-cis-undecaprenyl diphospho-N-acetyl-alpha-D-muramoyl-L-alanyl-D-glutamyl-meso-2,6-diaminopimeloyl-D-alanyl-D-alanine + UDP-N-acetyl-alpha-D-glucosamine = di-trans,octa-cis-undecaprenyl diphospho-[N-acetyl-alpha-D-glucosaminyl-(1-&gt;4)]-N-acetyl-alpha-D-muramoyl-L-alanyl-D-glutamyl-meso-2,6-diaminopimeloyl-D-alanyl-D-alanine + UDP + H(+). It functions in the pathway cell wall biogenesis; peptidoglycan biosynthesis. Its function is as follows. Cell wall formation. Catalyzes the transfer of a GlcNAc subunit on undecaprenyl-pyrophosphoryl-MurNAc-pentapeptide (lipid intermediate I) to form undecaprenyl-pyrophosphoryl-MurNAc-(pentapeptide)GlcNAc (lipid intermediate II). This chain is UDP-N-acetylglucosamine--N-acetylmuramyl-(pentapeptide) pyrophosphoryl-undecaprenol N-acetylglucosamine transferase, found in Shewanella oneidensis (strain ATCC 700550 / JCM 31522 / CIP 106686 / LMG 19005 / NCIMB 14063 / MR-1).